Here is a 144-residue protein sequence, read N- to C-terminus: Large ribosomal subunit protein uL15 (144 aa).

Residues 1 to 57 are disordered; it reads MLLNTLSPAAGSKHAPKRLGRGVGSGLGKTGGRGHKGQKSRSGGKVRPGFEGGQMPL. Positions 21–31 are enriched in gly residues; sequence RGVGSGLGKTG. The span at 32-44 shows a compositional bias: basic residues; sequence GRGHKGQKSRSGG.

It belongs to the universal ribosomal protein uL15 family. Part of the 50S ribosomal subunit.

Binds to the 23S rRNA. The protein is Large ribosomal subunit protein uL15 of Vibrio cholerae serotype O1 (strain ATCC 39315 / El Tor Inaba N16961).